Consider the following 856-residue polypeptide: MAP kinase phosphatase with leucine-rich repeats protein 3 (856 aa).

The segment covering 1 to 10 has biased composition (low complexity); that stretch reads MGNSHSSENG. 3 disordered regions span residues 1–24, 84–195, and 214–326; these read MGNSHSSENGGNSGSGGGSGGGGS, VKKN…SSVL, and DDNS…NAKD. A lipid anchor (N-myristoyl glycine) is attached at glycine 2. Positions 11–24 are enriched in gly residues; the sequence is GNSGSGGGSGGGGS. Residues 90-142 show a composition bias toward low complexity; the sequence is NSSNNNSNNNSNNNNNNNTLNNSTIITTTTTTTTTSTPTTTIMITPPQQQQQQ. The segment covering 155 to 165 has biased composition (polar residues); that stretch reads ESSTPNEQQIR. Low complexity-rich tracts occupy residues 178-195 and 224-243; these read ESSFLKSSPVPSPSSSVL and QQQQQQQNEDSKQSSQQQTQ. 2 stretches are compositionally biased toward polar residues: residues 254–265 and 272–281; these read IVNNKSSSTTNI and AQTSRSTSIP. The span at 306–323 shows a compositional bias: low complexity; sequence NSLSSSNIITPNNTTNTN. LRR repeat units lie at residues 344 to 365, 370 to 391, 392 to 413, 416 to 437, 439 to 461, 462 to 484, 485 to 506, and 507 to 528; these read KIFSLDLSINRLENITNDILSI, EIQELTLSTNFFQIIPDLQLVK, SLTTVNLTRNKLSKLQTSVFIE, SLTSLILDRNFISSIPDDIDQI, NLKYLSIKHNALEYLPNSLSNLS, QLISLDLSQNKLKTLPPNFDDLI, NLRMVWLSYNQITSLPSMRKLV, and NLVTFDISSNKLLSLPKDFAYL. The tract at residues 554–577 is disordered; it reads NINSNNNDSNNSNNNNNNNNDNNN. Positions 632-773 constitute a Tyrosine-protein phosphatase domain; that stretch reads IPSEIIPGIF…LLKYEAKLFC (142 aa). Residue cysteine 717 is the Phosphocysteine intermediate of the active site. The interval 810-856 is disordered; the sequence is INNSSNSNNNNSTDNSNNSSTSTTPNLSSLSSDSSSSASLSKLSISK.

It belongs to the protein-tyrosine phosphatase family. Non-receptor class dual specificity subfamily.

The enzyme catalyses O-phospho-L-tyrosyl-[protein] + H2O = L-tyrosyl-[protein] + phosphate. It catalyses the reaction O-phospho-L-seryl-[protein] + H2O = L-seryl-[protein] + phosphate. The catalysed reaction is O-phospho-L-threonyl-[protein] + H2O = L-threonyl-[protein] + phosphate. Probable phosphatase with dual specificity toward Ser/Thr and Tyr-containing proteins. In Dictyostelium discoideum (Social amoeba), this protein is MAP kinase phosphatase with leucine-rich repeats protein 3 (mpl3).